We begin with the raw amino-acid sequence, 212 residues long: Phosphatidylserine decarboxylase proenzyme (212 aa).

Ser-182 functions as the Schiff-base intermediate with substrate; via pyruvic acid in the catalytic mechanism. Ser-182 bears the Pyruvic acid (Ser); by autocatalysis mark.

This sequence belongs to the phosphatidylserine decarboxylase family. PSD-A subfamily. Heterodimer of a large membrane-associated beta subunit and a small pyruvoyl-containing alpha subunit. Requires pyruvate as cofactor. In terms of processing, is synthesized initially as an inactive proenzyme. Formation of the active enzyme involves a self-maturation process in which the active site pyruvoyl group is generated from an internal serine residue via an autocatalytic post-translational modification. Two non-identical subunits are generated from the proenzyme in this reaction, and the pyruvate is formed at the N-terminus of the alpha chain, which is derived from the carboxyl end of the proenzyme. The post-translation cleavage follows an unusual pathway, termed non-hydrolytic serinolysis, in which the side chain hydroxyl group of the serine supplies its oxygen atom to form the C-terminus of the beta chain, while the remainder of the serine residue undergoes an oxidative deamination to produce ammonia and the pyruvoyl prosthetic group on the alpha chain.

Its subcellular location is the cell membrane. The enzyme catalyses a 1,2-diacyl-sn-glycero-3-phospho-L-serine + H(+) = a 1,2-diacyl-sn-glycero-3-phosphoethanolamine + CO2. Its pathway is phospholipid metabolism; phosphatidylethanolamine biosynthesis; phosphatidylethanolamine from CDP-diacylglycerol: step 2/2. Catalyzes the formation of phosphatidylethanolamine (PtdEtn) from phosphatidylserine (PtdSer). In Chlorobium limicola (strain DSM 245 / NBRC 103803 / 6330), this protein is Phosphatidylserine decarboxylase proenzyme.